The primary structure comprises 173 residues: Co-chaperone protein HscB (173 aa).

In terms of domain architecture, J spans aspartate 2–leucine 74.

This sequence belongs to the HscB family. As to quaternary structure, interacts with HscA and stimulates its ATPase activity. Interacts with IscU.

Co-chaperone involved in the maturation of iron-sulfur cluster-containing proteins. Seems to help targeting proteins to be folded toward HscA. This chain is Co-chaperone protein HscB, found in Serratia proteamaculans (strain 568).